A 126-amino-acid polypeptide reads, in one-letter code: MGIRGLGLDICSISRIQRILDGPRAEPFLNRVYTEAERALCGRRSDAASAYAARFAAKEALVKALGAPPGIRWKDMEVRRQGGAPYFALSGVALEVMEARGLEAFLALTHDADVAAATVVLQSKGD.

Mg(2+) contacts are provided by Asp-9 and Glu-59.

Belongs to the P-Pant transferase superfamily. AcpS family. The cofactor is Mg(2+).

Its subcellular location is the cytoplasm. It carries out the reaction apo-[ACP] + CoA = holo-[ACP] + adenosine 3',5'-bisphosphate + H(+). Functionally, transfers the 4'-phosphopantetheine moiety from coenzyme A to a Ser of acyl-carrier-protein. The polypeptide is Holo-[acyl-carrier-protein] synthase (Myxococcus xanthus (strain DK1622)).